The following is a 664-amino-acid chain: Protein-arginine deiminase type-3 (664 aa).

It belongs to the protein arginine deiminase family. The cofactor is Ca(2+). As to expression, epidermis and hair follicles.

It is found in the cytoplasm. It carries out the reaction L-arginyl-[protein] + H2O = L-citrullyl-[protein] + NH4(+). In terms of biological role, catalyzes the deimination of arginine residues of proteins. The chain is Protein-arginine deiminase type-3 (Padi3) from Rattus norvegicus (Rat).